Here is a 276-residue protein sequence, read N- to C-terminus: Ribosomal RNA small subunit methyltransferase A (276 aa).

Residues Asn27, Leu29, Gly54, Glu75, Asp101, and Asn122 each coordinate S-adenosyl-L-methionine.

This sequence belongs to the class I-like SAM-binding methyltransferase superfamily. rRNA adenine N(6)-methyltransferase family. RsmA subfamily.

It is found in the cytoplasm. The enzyme catalyses adenosine(1518)/adenosine(1519) in 16S rRNA + 4 S-adenosyl-L-methionine = N(6)-dimethyladenosine(1518)/N(6)-dimethyladenosine(1519) in 16S rRNA + 4 S-adenosyl-L-homocysteine + 4 H(+). Its function is as follows. Specifically dimethylates two adjacent adenosines (A1518 and A1519) in the loop of a conserved hairpin near the 3'-end of 16S rRNA in the 30S particle. May play a critical role in biogenesis of 30S subunits. The polypeptide is Ribosomal RNA small subunit methyltransferase A (Brucella melitensis biotype 1 (strain ATCC 23456 / CCUG 17765 / NCTC 10094 / 16M)).